A 716-amino-acid chain; its full sequence is DNA ligase (716 aa).

NAD(+) is bound by residues 42–46 (DAEYD), 91–92 (SL), and Glu125. Residue Lys127 is the N6-AMP-lysine intermediate of the active site. The NAD(+) site is built by Arg148, Glu184, Lys300, and Lys324. Zn(2+) contacts are provided by Cys429, Cys432, Cys447, and Cys453. The BRCT domain maps to 638-716 (TASSPIAGKI…EEAWLQLIEG (79 aa)).

The protein belongs to the NAD-dependent DNA ligase family. LigA subfamily. Mg(2+) serves as cofactor. Mn(2+) is required as a cofactor.

It catalyses the reaction NAD(+) + (deoxyribonucleotide)n-3'-hydroxyl + 5'-phospho-(deoxyribonucleotide)m = (deoxyribonucleotide)n+m + AMP + beta-nicotinamide D-nucleotide.. Its function is as follows. DNA ligase that catalyzes the formation of phosphodiester linkages between 5'-phosphoryl and 3'-hydroxyl groups in double-stranded DNA using NAD as a coenzyme and as the energy source for the reaction. It is essential for DNA replication and repair of damaged DNA. The polypeptide is DNA ligase (Bartonella henselae (strain ATCC 49882 / DSM 28221 / CCUG 30454 / Houston 1) (Rochalimaea henselae)).